A 200-amino-acid chain; its full sequence is ATP-dependent Clp protease proteolytic subunit 1 (200 aa).

Ser-98 serves as the catalytic Nucleophile. Residue His-123 is part of the active site.

This sequence belongs to the peptidase S14 family. Fourteen ClpP subunits assemble into 2 heptameric rings which stack back to back to give a disk-like structure with a central cavity, resembling the structure of eukaryotic proteasomes.

The protein localises to the cytoplasm. It catalyses the reaction Hydrolysis of proteins to small peptides in the presence of ATP and magnesium. alpha-casein is the usual test substrate. In the absence of ATP, only oligopeptides shorter than five residues are hydrolyzed (such as succinyl-Leu-Tyr-|-NHMec, and Leu-Tyr-Leu-|-Tyr-Trp, in which cleavage of the -Tyr-|-Leu- and -Tyr-|-Trp bonds also occurs).. Cleaves peptides in various proteins in a process that requires ATP hydrolysis. Has a chymotrypsin-like activity. Plays a major role in the degradation of misfolded proteins. This is ATP-dependent Clp protease proteolytic subunit 1 from Mycobacterium leprae (strain TN).